The primary structure comprises 164 residues: Interferon gamma (164 aa).

The first 19 residues, 1–19 (MTCQTYNLFVLSVIMIYYG), serve as a signal peptide directing secretion. N-linked (GlcNAc...) asparagine glycans are attached at residues Asn-42 and Asn-61.

This sequence belongs to the type II (or gamma) interferon family. In terms of assembly, homodimer.

The protein localises to the secreted. In terms of biological role, produced by lymphocytes activated by specific antigens or mitogens. IFN-gamma, in addition to having antiviral activity, has important immunoregulatory functions. It is a potent activator of macrophages, it has antiproliferative effects on transformed cells and it can potentiate the antiviral and antitumor effects of the type I interferons. In Gallus gallus (Chicken), this protein is Interferon gamma (IFNG).